Consider the following 98-residue polypeptide: Integration host factor subunit alpha (98 aa).

Residues 54-74 (LRDKSSRPGRNPKTGESVPVS) are disordered.

Belongs to the bacterial histone-like protein family. In terms of assembly, heterodimer of an alpha and a beta chain.

In terms of biological role, this protein is one of the two subunits of integration host factor, a specific DNA-binding protein that functions in genetic recombination as well as in transcriptional and translational control. The protein is Integration host factor subunit alpha (ihfA) of Pasteurella multocida (strain Pm70).